The following is a 717-amino-acid chain: Acetone carboxylase beta subunit (717 aa).

Heterohexamer of two alpha, two beta and two gamma subunits. Requires Fe cation as cofactor. It depends on Mg(2+) as a cofactor. Zn(2+) serves as cofactor. In terms of processing, the N-terminus is blocked.

The catalysed reaction is acetone + hydrogencarbonate + 2 ATP + 3 H2O = acetoacetate + 2 AMP + 4 phosphate + 4 H(+). In terms of biological role, catalyzes the carboxylation of acetone to form acetoacetate. Has a reduced activity on butanone, and no activity on 2-pentatone, 3-pentatone, 2-hexanone, chloroacetone, pyruvate, phosphoenolpyruvate, acetaldehyde, propionaldehyde and propylene oxide. In Xanthobacter autotrophicus (strain ATCC BAA-1158 / Py2), this protein is Acetone carboxylase beta subunit.